A 465-amino-acid polypeptide reads, in one-letter code: Fujikurins efflux protein FFUJ_12242 (465 aa).

Positions 1–66 (MATNVGGAVD…AAKAHDEGPP (66 aa)) are disordered. Basic and acidic residues predominate over residues 11 to 28 (NSRRSISDNRHDPEKPAE). 7 consecutive transmembrane segments (helical) span residues 70-90 (TAAW…PGWI), 115-135 (WIPS…GIIF), 142-162 (PLII…SLAK), 175-195 (SAIG…TWFL), 200-220 (AAMG…PIMI), 231-251 (WALR…CLTV), and 274-294 (PAFA…YIPI). Residue asparagine 310 is glycosylated (N-linked (GlcNAc...) asparagine). A run of 5 helical transmembrane segments spans residues 314 to 334 (YLVA…GYGA), 342 to 362 (MFII…IPAT), 368 to 388 (IGYA…VGAL), 404 to 424 (IVFL…GAIL), and 430 to 450 (GWVS…AIIL).

This sequence belongs to the major facilitator superfamily. Monocarboxylate porter (TC 2.A.1.13) family.

The protein localises to the cell membrane. In terms of biological role, efflux pump that may be involved in the secretion of fujikurins. This Gibberella fujikuroi (strain CBS 195.34 / IMI 58289 / NRRL A-6831) (Bakanae and foot rot disease fungus) protein is Fujikurins efflux protein FFUJ_12242.